The chain runs to 475 residues: Ribulose bisphosphate carboxylase large chain (475 aa).

A propeptide spanning residues 1–2 (MS) is cleaved from the precursor. Position 3 is an N-acetylproline (Pro-3). The residue at position 14 (Lys-14) is an N6,N6,N6-trimethyllysine. Residues Asn-123 and Thr-173 each coordinate substrate. Lys-175 serves as the catalytic Proton acceptor. Lys-177 serves as a coordination point for substrate. Mg(2+)-binding residues include Lys-201, Asp-203, and Glu-204. N6-carboxylysine is present on Lys-201. His-294 functions as the Proton acceptor in the catalytic mechanism. 3 residues coordinate substrate: Arg-295, His-327, and Ser-379.

This sequence belongs to the RuBisCO large chain family. Type I subfamily. Heterohexadecamer of 8 large chains and 8 small chains; disulfide-linked. The disulfide link is formed within the large subunit homodimers. The cofactor is Mg(2+). The disulfide bond which can form in the large chain dimeric partners within the hexadecamer appears to be associated with oxidative stress and protein turnover.

Its subcellular location is the plastid. It localises to the chloroplast. It catalyses the reaction 2 (2R)-3-phosphoglycerate + 2 H(+) = D-ribulose 1,5-bisphosphate + CO2 + H2O. The catalysed reaction is D-ribulose 1,5-bisphosphate + O2 = 2-phosphoglycolate + (2R)-3-phosphoglycerate + 2 H(+). RuBisCO catalyzes two reactions: the carboxylation of D-ribulose 1,5-bisphosphate, the primary event in carbon dioxide fixation, as well as the oxidative fragmentation of the pentose substrate in the photorespiration process. Both reactions occur simultaneously and in competition at the same active site. The protein is Ribulose bisphosphate carboxylase large chain of Quercus rubra (Northern red oak).